A 439-amino-acid chain; its full sequence is Glutamate--tRNA ligase 2 (439 aa).

The 'HIGH' region motif lies at Pro6 to Asn16. Positions Lys232 to Arg236 match the 'KMSKS' region motif. Lys235 is an ATP binding site.

This sequence belongs to the class-I aminoacyl-tRNA synthetase family. Glutamate--tRNA ligase type 1 subfamily. Monomer.

It is found in the cytoplasm. It carries out the reaction tRNA(Glu) + L-glutamate + ATP = L-glutamyl-tRNA(Glu) + AMP + diphosphate. Its function is as follows. Catalyzes the attachment of glutamate to tRNA(Glu) in a two-step reaction: glutamate is first activated by ATP to form Glu-AMP and then transferred to the acceptor end of tRNA(Glu). The polypeptide is Glutamate--tRNA ligase 2 (Helicobacter pylori (strain HPAG1)).